We begin with the raw amino-acid sequence, 465 residues long: Probable oxidoreductase AIM17 (465 aa).

The transit peptide at 1 to 16 (MLRSNLCRGSRILARL) directs the protein to the mitochondrion. The Fe cation site is built by H246, D248, and H428.

The protein belongs to the gamma-BBH/TMLD family. It depends on Fe(2+) as a cofactor. Requires L-ascorbate as cofactor.

It localises to the mitochondrion. This Saccharomyces cerevisiae (strain ATCC 204508 / S288c) (Baker's yeast) protein is Probable oxidoreductase AIM17 (AIM17).